The primary structure comprises 309 residues: Epidermal retinol dehydrogenase 2 (309 aa).

Residues 11–31 (LLVFLGKSLLSVLEALLFHVI) traverse the membrane as a helical segment. 44 to 68 (LITGAGSGLGRLLALQFARLGAVLV) serves as a coordination point for NADP(+). Position 177 (Ser-177) interacts with substrate. The Proton acceptor role is filled by Tyr-190. Residues 270-290 (FLYFIVFLKSILPIKTGILIA) form a helical membrane-spanning segment.

The protein belongs to the short-chain dehydrogenases/reductases (SDR) family.

The protein localises to the endoplasmic reticulum membrane. It catalyses the reaction all-trans-retinol--[retinol-binding protein] + NAD(+) = all-trans-retinal--[retinol-binding protein] + NADH + H(+). The protein operates within cofactor metabolism; retinol metabolism. Functionally, oxidoreductase with strong preference for NAD. Active in both the oxidative and reductive directions. Oxidizes all-trans-retinol in all-trans-retinaldehyde. No activity was detected with 11-cis-retinol or 11-cis-retinaldehyde as substrates with either NAD(+)/NADH or NADP(+)/NADPH. This chain is Epidermal retinol dehydrogenase 2, found in Mus musculus (Mouse).